A 291-amino-acid polypeptide reads, in one-letter code: Homoserine kinase (291 aa).

79-89 (PLARGLGSSSA) lines the ATP pocket.

Belongs to the GHMP kinase family. Homoserine kinase subfamily.

Its subcellular location is the cytoplasm. The catalysed reaction is L-homoserine + ATP = O-phospho-L-homoserine + ADP + H(+). Its pathway is amino-acid biosynthesis; L-threonine biosynthesis; L-threonine from L-aspartate: step 4/5. Functionally, catalyzes the ATP-dependent phosphorylation of L-homoserine to L-homoserine phosphate. In Leuconostoc citreum (strain KM20), this protein is Homoserine kinase.